The primary structure comprises 105 residues: Guanidinium exporter (105 aa).

A helical transmembrane segment spans residues 1–21 (MSWIILLIAGLLEVVWAVGLK). At 22–28 (YTHGFSR) the chain is on the cytoplasmic side. Residues 29 to 49 (LTPSIITITAMVISMALLSWA) traverse the membrane as a helical segment. Topologically, residues 50–57 (MKTLPVGT) are periplasmic. Residues 58 to 78 (AYAIWTGIGAVGAAITGILLL) form a helical membrane-spanning segment. At 79–81 (GES) the chain is on the cytoplasmic side. The helical transmembrane segment at 82–102 (ASPARLLSLGLIVAGIIGLKL) threads the bilayer. Over 103–105 (SAH) the chain is Periplasmic.

It belongs to the drug/metabolite transporter (DMT) superfamily. Small multidrug resistance (SMR) (TC 2.A.7.1) family. Gdx/SugE subfamily.

The protein resides in the cell inner membrane. Functionally, guanidinium ion exporter. Couples guanidinium export to the proton motive force, exchanging one guanidinium ion for two protons. The protein is Guanidinium exporter of Salmonella typhi.